Consider the following 215-residue polypeptide: Superoxide dismutase [Mn] (215 aa).

Mn(2+) contacts are provided by His27, His83, Asp170, and His174.

Belongs to the iron/manganese superoxide dismutase family. As to quaternary structure, homodimer. The cofactor is Mn(2+).

The catalysed reaction is 2 superoxide + 2 H(+) = H2O2 + O2. Its function is as follows. Destroys superoxide anion radicals which are normally produced within the cells and which are toxic to biological systems. This chain is Superoxide dismutase [Mn] (sodA), found in Haemophilus influenzae (strain ATCC 51907 / DSM 11121 / KW20 / Rd).